A 583-amino-acid chain; its full sequence is Proteasome-associated ATPase (583 aa).

Residues 1–19 (METPNQDSGRTPTEQSAAN) are compositionally biased toward polar residues. Positions 1 to 22 (METPNQDSGRTPTEQSAANDLS) are disordered. The stretch at 24 to 75 (ADRQVNILRDKLRHIDRQLAAATQNNTKLVSMLETAKAEILRLKNALDQEGQ) forms a coiled coil. 271-276 (GCGKTL) provides a ligand contact to ATP. A docks into pockets in the proteasome alpha-ring region spans residues 582–583 (YL).

Belongs to the AAA ATPase family. Homohexamer. Assembles into a hexameric ring structure that caps the 20S proteasome core. Strongly interacts with the prokaryotic ubiquitin-like protein Pup through a hydrophobic interface; the interacting region of ARC lies in its N-terminal coiled-coil domain. There is one Pup binding site per ARC hexamer ring. Upon ATP-binding, the C-terminus of ARC interacts with the alpha-rings of the proteasome core, possibly by binding to the intersubunit pockets.

It participates in protein degradation; proteasomal Pup-dependent pathway. Its function is as follows. ATPase which is responsible for recognizing, binding, unfolding and translocation of pupylated proteins into the bacterial 20S proteasome core particle. May be essential for opening the gate of the 20S proteasome via an interaction with its C-terminus, thereby allowing substrate entry and access to the site of proteolysis. Thus, the C-termini of the proteasomal ATPase may function like a 'key in a lock' to induce gate opening and therefore regulate proteolysis. This is Proteasome-associated ATPase from Pseudarthrobacter chlorophenolicus (strain ATCC 700700 / DSM 12829 / CIP 107037 / JCM 12360 / KCTC 9906 / NCIMB 13794 / A6) (Arthrobacter chlorophenolicus).